The primary structure comprises 413 residues: Serine hydroxymethyltransferase (413 aa).

(6S)-5,6,7,8-tetrahydrofolate-binding positions include leucine 117 and 121-123 (GHL). Lysine 226 bears the N6-(pyridoxal phosphate)lysine mark. (6S)-5,6,7,8-tetrahydrofolate-binding positions include glutamate 241 and 349–351 (SPF).

It belongs to the SHMT family. As to quaternary structure, homodimer. It depends on pyridoxal 5'-phosphate as a cofactor.

The protein localises to the cytoplasm. The catalysed reaction is (6R)-5,10-methylene-5,6,7,8-tetrahydrofolate + glycine + H2O = (6S)-5,6,7,8-tetrahydrofolate + L-serine. It functions in the pathway one-carbon metabolism; tetrahydrofolate interconversion. It participates in amino-acid biosynthesis; glycine biosynthesis; glycine from L-serine: step 1/1. Its function is as follows. Catalyzes the reversible interconversion of serine and glycine with tetrahydrofolate (THF) serving as the one-carbon carrier. This reaction serves as the major source of one-carbon groups required for the biosynthesis of purines, thymidylate, methionine, and other important biomolecules. Also exhibits THF-independent aldolase activity toward beta-hydroxyamino acids, producing glycine and aldehydes, via a retro-aldol mechanism. This is Serine hydroxymethyltransferase from Halalkalibacterium halodurans (strain ATCC BAA-125 / DSM 18197 / FERM 7344 / JCM 9153 / C-125) (Bacillus halodurans).